The primary structure comprises 99 residues: UPF0125 protein PM0166 (99 aa).

It belongs to the UPF0125 (RnfH) family.

In Pasteurella multocida (strain Pm70), this protein is UPF0125 protein PM0166.